A 457-amino-acid chain; its full sequence is D(1B) dopamine receptor (457 aa).

Over Met-1–Gln-41 the chain is Extracellular. N-linked (GlcNAc...) asparagine glycosylation occurs at Asn-24. Residues Ile-42–Met-67 traverse the membrane as a helical segment. Topologically, residues Arg-68 to Asn-78 are cytoplasmic. The helical transmembrane segment at Ile-79–Ala-105 threads the bilayer. Over Gly-106 to Cys-114 the chain is Extracellular. Cys-114 and Cys-199 are oxidised to a cystine. Residues Asp-115–Val-137 traverse the membrane as a helical segment. Residues Asp-138 to Arg-156 are Cytoplasmic-facing. A helical membrane pass occupies residues Val-157 to Trp-181. Residues His-182 to Arg-205 lie on the Extracellular side of the membrane. A helical transmembrane segment spans residues Thr-206–Tyr-231. Residues Arg-232–Lys-282 lie on the Cytoplasmic side of the membrane. The chain crosses the membrane as a helical span at residues Thr-283–Asp-309. Residues Arg-310–Thr-326 are Extracellular-facing. A helical transmembrane segment spans residues Phe-327–Phe-351. The Cytoplasmic portion of the chain corresponds to Arg-352–His-457. Cys-361 carries the S-palmitoyl cysteine lipid modification.

This sequence belongs to the G-protein coupled receptor 1 family. As to expression, brain and kidney.

It localises to the cell membrane. Functionally, dopamine receptor whose activity is mediated by G proteins which activate adenylyl cyclase. This chain is D(1B) dopamine receptor (drd5), found in Xenopus laevis (African clawed frog).